An 873-amino-acid chain; its full sequence is Polyribonucleotide nucleotidyltransferase (873 aa).

Mg(2+)-binding residues include Asp-521 and Asp-527. A KH domain is found at 587 to 646; it reads PRIITTTVPVDKIGEVIGPKGKMINQIQEDTGAEIAIEDDGTVYISSEGGEAAEKAKQII. Positions 658–730 constitute an S1 motif domain; that stretch reads GETYKGTVVK…DRGKISLAIP (73 aa). The segment at 727–873 is disordered; sequence LAIPGFENQE…VRRDFDPFDD (147 aa). The segment covering 742-857 has biased composition (basic and acidic residues); the sequence is RRSDDRPRRD…EYREGREVRH (116 aa).

Belongs to the polyribonucleotide nucleotidyltransferase family. Requires Mg(2+) as cofactor.

The protein localises to the cytoplasm. It catalyses the reaction RNA(n+1) + phosphate = RNA(n) + a ribonucleoside 5'-diphosphate. Involved in mRNA degradation. Catalyzes the phosphorolysis of single-stranded polyribonucleotides processively in the 3'- to 5'-direction. The sequence is that of Polyribonucleotide nucleotidyltransferase from Bifidobacterium animalis subsp. lactis (strain AD011).